An 831-amino-acid polypeptide reads, in one-letter code: Translation initiation factor IF-2 (831 aa).

A tr-type G domain is found at 329–499 (TRAPVVTVMG…LLIAEMQDLK (171 aa)). The segment at 338–345 (GHVDHGKT) is G1. GTP is bound at residue 338 to 345 (GHVDHGKT). The tract at residues 363–367 (GITQH) is G2. A G3 region spans residues 385–388 (DTPG). Residues 385-389 (DTPGH) and 439-442 (NKID) contribute to the GTP site. The interval 439–442 (NKID) is G4. Residues 475–477 (SAL) are G5.

Belongs to the TRAFAC class translation factor GTPase superfamily. Classic translation factor GTPase family. IF-2 subfamily.

Its subcellular location is the cytoplasm. In terms of biological role, one of the essential components for the initiation of protein synthesis. Protects formylmethionyl-tRNA from spontaneous hydrolysis and promotes its binding to the 30S ribosomal subunits. Also involved in the hydrolysis of GTP during the formation of the 70S ribosomal complex. The sequence is that of Translation initiation factor IF-2 from Rickettsia massiliae (strain Mtu5).